The sequence spans 38 residues: Phospholipase A2 1 (38 aa).

Ca(2+)-binding residues include Y28, G30, and G32.

Belongs to the phospholipase A2 family. Group I subfamily. It depends on Ca(2+) as a cofactor. As to expression, expressed by the venom gland.

The protein resides in the secreted. The enzyme catalyses a 1,2-diacyl-sn-glycero-3-phosphocholine + H2O = a 1-acyl-sn-glycero-3-phosphocholine + a fatty acid + H(+). In terms of biological role, snake venom phospholipase A2 (PLA2) that inhibits neuromuscular transmission by blocking acetylcholine release from the nerve termini. PLA2 catalyzes the calcium-dependent hydrolysis of the 2-acyl groups in 3-sn-phosphoglycerides. This chain is Phospholipase A2 1, found in Calliophis bivirgatus (Blue Malaysian coral snake).